The following is a 273-amino-acid chain: Homeobox protein Nkx-2.2 (273 aa).

2 disordered regions span residues M1–V56 and L90–R131. Residues D20–G38 show a composition bias toward acidic residues. The homeobox DNA-binding region spans K128–R187.

It belongs to the NK-2 homeobox family. Interacts with OLIG2.

The protein localises to the nucleus. Its function is as follows. Transcriptional activator involved in the development of insulin-producting beta cells in the endocrine pancreas. May also be involved in specifying diencephalic neuromeric boundaries, and in controlling the expression of genes that play a role in axonal guidance. Binds to elements within the NEUROD1 promoter. The protein is Homeobox protein Nkx-2.2 (NKX2-2) of Homo sapiens (Human).